A 155-amino-acid chain; its full sequence is Endoribonuclease YbeY (155 aa).

3 residues coordinate Zn(2+): H114, H118, and H124.

Belongs to the endoribonuclease YbeY family. It depends on Zn(2+) as a cofactor.

It localises to the cytoplasm. Its function is as follows. Single strand-specific metallo-endoribonuclease involved in late-stage 70S ribosome quality control and in maturation of the 3' terminus of the 16S rRNA. The protein is Endoribonuclease YbeY of Escherichia coli O7:K1 (strain IAI39 / ExPEC).